The primary structure comprises 456 residues: Phosphoglucomutase/phosphomannomutase (456 aa).

Serine 101 (phosphoserine intermediate) is an active-site residue. Mg(2+) contacts are provided by serine 101, aspartate 243, aspartate 245, and aspartate 247. The residue at position 101 (serine 101) is a Phosphoserine; by autocatalysis.

Belongs to the phosphohexose mutase family. Homotetramer. Mg(2+) is required as a cofactor. In terms of processing, activated by phosphorylation.

It carries out the reaction alpha-D-glucose 1-phosphate = alpha-D-glucose 6-phosphate. The enzyme catalyses alpha-D-mannose 1-phosphate = D-mannose 6-phosphate. In terms of biological role, catalyzes the interconversion of glucose 1-phosphate and glucose 6-phosphate, and the interconversion of mannose 1-phosphate and mannose 6-phosphate. Also displays low activity with deoxyribose 1-phosphate and glucosamine 1-phosphate. The chain is Phosphoglucomutase/phosphomannomutase from Thermococcus kodakarensis (strain ATCC BAA-918 / JCM 12380 / KOD1) (Pyrococcus kodakaraensis (strain KOD1)).